Reading from the N-terminus, the 4144-residue chain is DNA-dependent protein kinase catalytic subunit (4144 aa).

Lys127 carries the N6-acetyllysine modification. The HEAT 1 repeat unit spans residues 298–333 (DNYVSLFEVLSKWCSHTNVEMKKAAHSALESFLKQV). Ser521, Ser851, and Ser903 each carry phosphoserine. The HEAT 2 repeat unit spans residues 1014–1050 (QDTVALLETILDGIVDPVDSTLRDFCGRCIREFLKWS). At Ser1075 the chain carries Phosphoserine. Lys1219 bears the N6-acetyllysine mark. The tract at residues 1516–1551 (LDPSCKRLASGLLELAFAFGGLCEHLVDLLLDTAVL) is interaction with C1D. The interval 1516–1551 (LDPSCKRLASGLLELAFAFGGLCEHLVDLLLDTAVL) is leucine-zipper. The stretch at 1736 to 1769 (PMKSEEFPVGTLRYSNYVDCMKKFLDALELSQSP) is one TPR 1 repeat. Lys1983 carries the N6-acetyllysine modification. Ser2069 bears the Phosphoserine; by autocatalysis mark. Lys2271 is subject to N6-acetyllysine. Residues 2448–3228 (LDIIYKMMAK…DHSLSMDEER (781 aa)) form a KIP-binding region. At Thr2547 the chain carries Phosphothreonine. The residue at position 2621 (Thr2621) is a Phosphothreonine; by autocatalysis. The residue at position 2624 (Ser2624) is a Phosphoserine; by autocatalysis. Thr2650 and Thr2659 each carry phosphothreonine; by autocatalysis. Residues 2697–2729 (AQKRNEKSQRAPLKSVGPDFGEKKLGLPGDKVD) form a disordered region. A compositionally biased stretch (basic and acidic residues) spans 2716–2729 (FGEKKLGLPGDKVD). Positions 2753-2781 (EKLSLIYARKGIAEQKREKEIKSELKMKH) are may split the end of the DNA molecule, with the two strands separating around the region. Residue Ser2805 is modified to Phosphoserine. TPR repeat units lie at residues 2903 to 2935 (PVGV…VSPD), 2936 to 2964 (VVRW…SEIG), and 2965 to 2998 (TKQI…EEWV). The region spanning 2922-3555 (PAKQFKGRMR…VYPFIISSES (634 aa)) is the FAT domain. Phosphoserine is present on Ser3221. Lys3257, Lys3276, Lys3654, and Lys3658 each carry N6-acetyllysine. The stretch at 3711–3748 (LRNELEIPGQYDGKGKPLPEYHARIAGFDERIKVMASI) is one TPR 5 repeat. The PI3K/PI4K catalytic domain maps to 3738–4069 (FDERIKVMAS…IHYAKRKLAG (332 aa)). Residues 3744–3750 (VMASIRK) are G-loop. Residues Ser3747 and Ser3837 each carry the phosphoserine modification. Positions 3935-3943 (GIGDRHLNN) are catalytic loop. Residues 3955–3980 (GIDFGHAFGSATQFLPVPELMPFRLT) form an activation loop region. Phosphoserine is present on Ser4042. The 33-residue stretch at 4112–4144 (NGLSEEAQVKCLIDQATDPNILGRTWIGWEPWM) folds into the FATC domain.

It belongs to the PI3/PI4-kinase family. As to quaternary structure, DNA-PK is a heterotrimer of PRKDC and the Ku dimer (composed of XRCC6/Ku70 and XRCC5/Ku86). Formation of this complex may be promoted by interaction with ILF3. Component of the core long-range non-homologous end joining (NHEJ) complex (also named DNA-PK complex) composed of PRKDC, LIG4, XRCC4, XRCC6/Ku70, XRCC5/Ku86 and NHEJ1/XLF. Additional component of the NHEJ complex includes PAXX. Following autophosphorylation, PRKDC dissociates from DNA. Interacts with DNA-PKcs-interacting protein (KIP) with the region upstream the kinase domain. PRKDC alone also interacts with and phosphorylates DCLRE1C, thereby activating the latent endonuclease activity of this protein. Interacts with C1D. Interacts with TTI1 and TELO2. Interacts with CIB1. Interacts with SETX. Interacts with NR4A3; the DNA-dependent protein kinase complex DNA-PK phosphorylates and activates NR4A3 and prevents NR4A3 ubiquitination and degradation. Interacts with BRAT1. Part of the HDP-RNP complex composed of at least HEXIM1, PRKDC, XRCC5, XRCC6, paraspeckle proteins (SFPQ, NONO, PSPC1, RBM14, and MATR3) and NEAT1 RNA. Interacts with KAT5. In terms of processing, autophosphorylated at two clusters, the T2609 cluster and the S2056 cluster. Autophosphorylated on Ser-2069, Thr-2621, Thr-2650 and Thr-2659. Ser-2069 and Thr-2621 are DNA damage-inducible phosphorylation sites (inducible with ionizing radiation, IR) dephosphorylated by PPP5C. Autophosphorylation induces a conformational change that leads to remodeling of the DNA-PK complex, requisite for efficient end processing and DNA repair. Autophosphorylation in trans within DNA-PK complexes loaded on DNA ends leads to the dissociation of PRKDC from DNA and the transition into the short-range NHEJ complex. Autophosphorylation of the T2609 cluster is required for hematopoietic development and protein synthesis in erythrocytes precursors. S-nitrosylated by GAPDH. Post-translationally, polyubiquitinated by RNF144A, leading to proteasomal degradation.

Its subcellular location is the nucleus. The protein resides in the nucleolus. It is found in the cytoplasm. The protein localises to the cytosol. The enzyme catalyses L-seryl-[protein] + ATP = O-phospho-L-seryl-[protein] + ADP + H(+). The catalysed reaction is L-threonyl-[protein] + ATP = O-phospho-L-threonyl-[protein] + ADP + H(+). Its activity is regulated as follows. Activity seems to be attenuated by autophosphorylation. Binding to the SL1 region of U3 small nucleolar RNA promotes auto-phosphorylation activity. Inhibited by wortmannin. Functionally, serine/threonine-protein kinase that acts as a molecular sensor for DNA damage. Involved in DNA non-homologous end joining (NHEJ) required for double-strand break (DSB) repair and V(D)J recombination. Must be bound to DNA to express its catalytic properties. Promotes processing of hairpin DNA structures in V(D)J recombination by activation of the hairpin endonuclease artemis (DCLRE1C). Recruited by XRCC5 and XRCC6 to DNA ends and is required to (1) protect and align broken ends of DNA, thereby preventing their degradation, (2) and sequester the DSB for repair by NHEJ. Acts as a scaffold protein to aid the localization of DNA repair proteins to the site of damage. The assembly of the DNA-PK complex at DNA ends is also required for the NHEJ ligation step. Found at the ends of chromosomes, suggesting a further role in the maintenance of telomeric stability and the prevention of chromosomal end fusion. Also involved in modulation of transcription. As part of the DNA-PK complex, involved in the early steps of ribosome assembly by promoting the processing of precursor rRNA into mature 18S rRNA in the small-subunit processome. Binding to U3 small nucleolar RNA, recruits PRKDC and XRCC5/Ku86 to the small-subunit processome. Recognizes the substrate consensus sequence [ST]-Q. Phosphorylates 'Ser-139' of histone variant H2AX, thereby regulating DNA damage response mechanism. Phosphorylates ASF1A, DCLRE1C, c-Abl/ABL1, histone H1, HSPCA, c-jun/JUN, p53/TP53, PARP1, POU2F1, DHX9, FH, SRF, NHEJ1/XLF, XRCC1, XRCC4, XRCC5, XRCC6, WRN, MYC and RFA2. Can phosphorylate C1D not only in the presence of linear DNA but also in the presence of supercoiled DNA. Ability to phosphorylate p53/TP53 in the presence of supercoiled DNA is dependent on C1D. Acts as a regulator of the phosphatidylinositol 3-kinase/protein kinase B signal transduction by mediating phosphorylation of 'Ser-473' of protein kinase B (PKB/AKT1, PKB/AKT2, PKB/AKT3), promoting their activation. Contributes to the determination of the circadian period length by antagonizing phosphorylation of CRY1 'Ser-588' and increasing CRY1 protein stability, most likely through an indirect mechanism. Plays a role in the regulation of DNA virus-mediated innate immune response by assembling into the HDP-RNP complex, a complex that serves as a platform for IRF3 phosphorylation and subsequent innate immune response activation through the cGAS-STING pathway. Also regulates the cGAS-STING pathway by catalyzing phosphorylation of CGAS, thereby impairing CGAS oligomerization and activation. Also regulates the cGAS-STING pathway by mediating phosphorylation of PARP1. This is DNA-dependent protein kinase catalytic subunit (PRKDC) from Canis lupus familiaris (Dog).